The primary structure comprises 101 residues: NAD(P)H-quinone oxidoreductase subunit 4L, chloroplastic (101 aa).

Helical transmembrane passes span 2–22 (MLEY…YGLI), 32–52 (MCLE…SDLF), and 61–81 (IFSI…PAIV).

It belongs to the complex I subunit 4L family. In terms of assembly, NDH is composed of at least 16 different subunits, 5 of which are encoded in the nucleus.

Its subcellular location is the plastid. It localises to the chloroplast thylakoid membrane. The enzyme catalyses a plastoquinone + NADH + (n+1) H(+)(in) = a plastoquinol + NAD(+) + n H(+)(out). It carries out the reaction a plastoquinone + NADPH + (n+1) H(+)(in) = a plastoquinol + NADP(+) + n H(+)(out). Functionally, NDH shuttles electrons from NAD(P)H:plastoquinone, via FMN and iron-sulfur (Fe-S) centers, to quinones in the photosynthetic chain and possibly in a chloroplast respiratory chain. The immediate electron acceptor for the enzyme in this species is believed to be plastoquinone. Couples the redox reaction to proton translocation, and thus conserves the redox energy in a proton gradient. This Acorus calamus var. americanus (American sweet flag) protein is NAD(P)H-quinone oxidoreductase subunit 4L, chloroplastic.